A 344-amino-acid chain; its full sequence is Glycerol-3-phosphate dehydrogenase [NAD(P)+] (344 aa).

4 residues coordinate NADPH: W11, R31, R32, and K105. Positions 105, 133, and 135 each coordinate sn-glycerol 3-phosphate. NADPH is bound at residue A137. The sn-glycerol 3-phosphate site is built by K188, D241, S251, R252, and N253. The active-site Proton acceptor is the K188. An NADPH-binding site is contributed by R252. Position 278 (E278) interacts with NADPH.

The protein belongs to the NAD-dependent glycerol-3-phosphate dehydrogenase family.

The protein localises to the cytoplasm. It catalyses the reaction sn-glycerol 3-phosphate + NAD(+) = dihydroxyacetone phosphate + NADH + H(+). The catalysed reaction is sn-glycerol 3-phosphate + NADP(+) = dihydroxyacetone phosphate + NADPH + H(+). It participates in membrane lipid metabolism; glycerophospholipid metabolism. Functionally, catalyzes the reduction of the glycolytic intermediate dihydroxyacetone phosphate (DHAP) to sn-glycerol 3-phosphate (G3P), the key precursor for phospholipid synthesis. The polypeptide is Glycerol-3-phosphate dehydrogenase [NAD(P)+] (Acidithiobacillus ferrooxidans (strain ATCC 23270 / DSM 14882 / CIP 104768 / NCIMB 8455) (Ferrobacillus ferrooxidans (strain ATCC 23270))).